Reading from the N-terminus, the 570-residue chain is Probable D-xylulose kinase A (570 aa).

The substrate site is built by His-98, Asp-279, and Asn-280. ATP-binding positions include Trp-363, Gly-470–Gly-471, and Asn-474.

It belongs to the FGGY kinase family.

Its subcellular location is the cytoplasm. It carries out the reaction D-xylulose + ATP = D-xylulose 5-phosphate + ADP + H(+). Its function is as follows. Highly specific D-xylulose kinase which participates in the catabolism of xylose. Xylose is a major component of hemicelluloses such as xylan. Most fungi utilize D-xylose via three enzymatic reactions, xylose reductase (XR), xylitol dehydrogenase (XDH), and xylulokinase, to form xylulose 5-phosphate, which enters pentose phosphate pathway. This Arthroderma otae (strain ATCC MYA-4605 / CBS 113480) (Microsporum canis) protein is Probable D-xylulose kinase A (xkiA).